The sequence spans 280 residues: 3-hydroxyanthranilate 3,4-dioxygenase (280 aa).

The segment at 1-160 (MAIPVNVKKW…SEQYKSGKPD (160 aa)) is domain A (catalytic). Arginine 43 serves as a coordination point for O2. Positions 47, 53, and 91 each coordinate Fe cation. Position 53 (glutamate 53) interacts with substrate. 2 residues coordinate substrate: arginine 95 and glutamate 105. The tract at residues 161-177 (PAQPIGKMPFFLNTEQV) is linker. The tract at residues 178 to 280 (MEPFSFQNWL…IALSTSQVPA (103 aa)) is domain B.

This sequence belongs to the 3-HAO family. In terms of assembly, monomer. The cofactor is Fe(2+).

It is found in the cytoplasm. Its subcellular location is the cytosol. The enzyme catalyses 3-hydroxyanthranilate + O2 = (2Z,4Z)-2-amino-3-carboxymuconate 6-semialdehyde. It participates in cofactor biosynthesis; NAD(+) biosynthesis; quinolinate from L-kynurenine: step 3/3. Its function is as follows. Catalyzes the oxidative ring opening of 3-hydroxyanthranilate to 2-amino-3-carboxymuconate semialdehyde, which spontaneously cyclizes to quinolinate. The sequence is that of 3-hydroxyanthranilate 3,4-dioxygenase (haao) from Xenopus tropicalis (Western clawed frog).